We begin with the raw amino-acid sequence, 166 residues long: Ubiquitin-conjugating enzyme E2 13 (166 aa).

Positions Q4 to E164 constitute a UBC core domain. Catalysis depends on C89, which acts as the Glycyl thioester intermediate.

Belongs to the ubiquitin-conjugating enzyme family.

It carries out the reaction S-ubiquitinyl-[E1 ubiquitin-activating enzyme]-L-cysteine + [E2 ubiquitin-conjugating enzyme]-L-cysteine = [E1 ubiquitin-activating enzyme]-L-cysteine + S-ubiquitinyl-[E2 ubiquitin-conjugating enzyme]-L-cysteine.. Its pathway is protein modification; protein ubiquitination. Its function is as follows. Accepts the ubiquitin from the E1 complex and catalyzes its covalent attachment to other proteins. Involved in the formation of multiubiquitin chains. Signal the protein for selective degradation. The chain is Ubiquitin-conjugating enzyme E2 13 (UBC13) from Arabidopsis thaliana (Mouse-ear cress).